Here is a 288-residue protein sequence, read N- to C-terminus: Glycine--tRNA ligase alpha subunit (288 aa).

This sequence belongs to the class-II aminoacyl-tRNA synthetase family. Tetramer of two alpha and two beta subunits.

It localises to the cytoplasm. It catalyses the reaction tRNA(Gly) + glycine + ATP = glycyl-tRNA(Gly) + AMP + diphosphate. This chain is Glycine--tRNA ligase alpha subunit, found in Rickettsia massiliae (strain Mtu5).